Reading from the N-terminus, the 372-residue chain is CXADR-like membrane protein (372 aa).

The N-terminal stretch at 1-17 (MSLFFLWLVTYYVGTLG) is a signal peptide. Ig-like C2-type domains lie at 18-126 (THTE…VILK) and 134-223 (PKCE…VRVT). The Extracellular portion of the chain corresponds to 18-234 (THTEIKRVAE…QYVQSIGMVA (217 aa)). Cystine bridges form between cysteine 34-cysteine 110 and cysteine 152-cysteine 207. 2 N-linked (GlcNAc...) asparagine glycosylation sites follow: asparagine 73 and asparagine 196. The helical transmembrane segment at 235-255 (GAVTGIVAGALLIFLLIWLLI) threads the bilayer. Over 256-372 (RRKSKERYEE…PSQSRAFQTV (117 aa)) the chain is Cytoplasmic. The span at 263 to 280 (YEEEDRPNEIREDAEAPR) shows a compositional bias: basic and acidic residues. The interval 263 to 372 (YEEEDRPNEI…PSQSRAFQTV (110 aa)) is disordered. Composition is skewed to low complexity over residues 287-313 (SSSS…ASRS) and 352-361 (LTKAETTLST). The segment covering 362 to 372 (MPSQSRAFQTV) has biased composition (polar residues).

In terms of tissue distribution, predominantly expressed in the white adipose tissue.

Its subcellular location is the cell junction. The protein resides in the tight junction. It is found in the cell membrane. In terms of biological role, may be involved in the cell-cell adhesion. May play a role in adipocyte differentiation and development of obesity. Is required for normal small intestine development. The protein is CXADR-like membrane protein (Clmp) of Rattus norvegicus (Rat).